We begin with the raw amino-acid sequence, 727 residues long: Platelet endothelial cell adhesion molecule (727 aa).

An N-terminal signal peptide occupies residues 1–17 (MLLALGLTLVLYASLQA). Residues 18–590 (EENSFTINSI…VRVFLAPWKK (573 aa)) are Extracellular-facing. 6 consecutive Ig-like C2-type domains span residues 40 to 126 (GQQL…PKVT), 135 to 213 (GGVV…PIRS), 225 to 309 (PKFE…IMVN), 315 to 391 (PKPK…LVPI), 413 to 472 (GHAI…NCHS), and 488 to 578 (PVDE…RSST). Residues Cys-47 and Cys-99 are joined by a disulfide bond. 2 N-linked (GlcNAc...) asparagine glycosylation sites follow: Asn-74 and Asn-141. 2 cysteine pairs are disulfide-bonded: Cys-142–Cys-195 and Cys-245–Cys-293. Asn-309, Asn-345, Asn-360, Asn-424, and Asn-540 each carry an N-linked (GlcNAc...) asparagine glycan. Intrachain disulfides connect Cys-336-Cys-375, Cys-420-Cys-465, and Cys-512-Cys-561. Residues 591-609 (GLIAVVVIGVVIATLIVAA) traverse the membrane as a helical segment. The Cytoplasmic segment spans residues 610-727 (KCYFLRKAKA…SRTEGSLNGT (118 aa)). Residue Cys-611 is the site of S-palmitoyl cysteine attachment. The disordered stretch occupies residues 642 to 672 (SEPSVEANSHYGYDDVSGNDAVKPINQNKDP). 2 short sequence motifs (ITIM motif) span residues 677-682 (VEYTEV) and 700-705 (TVYSEI). Phosphotyrosine; by FER occurs at positions 679 and 702. The membrane-bound segment which detaches upon phosphorylation stretch occupies residues 698–718 (TETVYSEIRKVDPNLMENRYS). The interval 710-727 (PNLMENRYSRTEGSLNGT) is may play a role in cytoprotective signaling. A phosphoserine mark is found at Ser-718 and Ser-723.

As to quaternary structure, trans-homodimer (via Ig-like C2-type 1 and Ig-like C2-type 2 domains); trans-homodimerization is required for cell-cell interaction. Forms a complex with BDKRB2 and GNAQ. Interacts with BDKRB2 and GNAQ. Interacts with PTPN11; Tyr-702 is critical for PTPN11 recruitment. Interacts with FER. Interacts with CD177; the interaction is Ca(2+)-dependent; the interaction is direct. In terms of processing, phosphorylated on Ser and Tyr residues by src kinases after cellular activation. Upon activation, phosphorylated on Ser-718 which probably initiates the dissociation of the membrane-interaction segment (residues 698-718) from the cell membrane allowing the sequential phosphorylation of Tyr-702 and Tyr-679. Constitutively phosphorylated on Ser-723 in resting platelets. Phosphorylated on tyrosine residues by FER and FES in response to FCER1 activation. In endothelial cells Fyn mediates mechanical-force (stretch or pull) induced tyrosine phosphorylation. Palmitoylation by ZDHHC21 is necessary for cell surface expression in endothelial cells and enrichment in membrane rafts. Expressed in lung and platelets (at protein level).

It is found in the cell membrane. The protein resides in the membrane raft. It localises to the cell junction. Functionally, cell adhesion molecule which is required for leukocyte transendothelial migration (TEM) under most inflammatory conditions. Tyr-679 plays a critical role in TEM and is required for efficient trafficking of PECAM1 to and from the lateral border recycling compartment (LBRC) and is also essential for the LBRC membrane to be targeted around migrating leukocytes. Trans-homophilic interaction may play a role in endothelial cell-cell adhesion via cell junctions. Heterophilic interaction with CD177 plays a role in transendothelial migration of neutrophils. Homophilic ligation of PECAM1 prevents macrophage-mediated phagocytosis of neighboring viable leukocytes by transmitting a detachment signal. Promotes macrophage-mediated phagocytosis of apoptotic leukocytes by tethering them to the phagocytic cells; PECAM1-mediated detachment signal appears to be disabled in apoptotic leukocytes. Modulates bradykinin receptor BDKRB2 activation. Regulates bradykinin- and hyperosmotic shock-induced ERK1/2 activation in endothelial cells. Induces susceptibility to atherosclerosis. This Mus musculus (Mouse) protein is Platelet endothelial cell adhesion molecule (Pecam1).